We begin with the raw amino-acid sequence, 199 residues long: NAD(P)H dehydrogenase (quinone) (199 aa).

The Flavodoxin-like domain occupies 4-190 (MLVLYYSAYG…DGARFQGRRV (187 aa)). Residues 10 to 15 (SAYGHM) and 78 to 80 (TRY) contribute to the FMN site. Y12 contributes to the NAD(+) binding site. Position 98 (W98) interacts with substrate. Residues 113–119 (STATQYG) and H134 each bind FMN. A disordered region spans residues 161–181 (YGMTTTADGDGSRQPSAQELD). The span at 163-177 (MTTTADGDGSRQPSA) shows a compositional bias: polar residues.

It belongs to the WrbA family. FMN serves as cofactor.

It catalyses the reaction a quinone + NADH + H(+) = a quinol + NAD(+). It carries out the reaction a quinone + NADPH + H(+) = a quinol + NADP(+). In Brucella canis (strain ATCC 23365 / NCTC 10854 / RM-666), this protein is NAD(P)H dehydrogenase (quinone).